Reading from the N-terminus, the 121-residue chain is Flagellar protein FliT (121 aa).

Residues 1 to 50 (MNHAPHLYFAWQQLVDKSQLMLRLATEEQWDELIASEMAYVNAVQEIAHL) form a required for homodimerization region. A fliD binding region spans residues 60–98 (MQEQLRPMLRLILDNESKVKQLLQIRMDELAKLVGQSSV).

This sequence belongs to the FliT family. In terms of assembly, homodimer. Interacts with FliD and FlhC.

Its subcellular location is the cytoplasm. It is found in the cytosol. Dual-function protein that regulates the transcription of class 2 flagellar operons and that also acts as an export chaperone for the filament-capping protein FliD. As a transcriptional regulator, acts as an anti-FlhDC factor; it directly binds FlhC, thus inhibiting the binding of the FlhC/FlhD complex to class 2 promoters, resulting in decreased expression of class 2 flagellar operons. As a chaperone, effects FliD transition to the membrane by preventing its premature polymerization, and by directing it to the export apparatus. In Shigella sonnei (strain Ss046), this protein is Flagellar protein FliT.